The chain runs to 193 residues: Cryptic protein (193 aa).

Residues 1-25 (MFWRKHVRILFTVTLIWQAIHLGKG) form the signal peptide. Residues Asn38 and Asn60 are each glycosylated (N-linked (GlcNAc...) asparagine). Disulfide bonds link Cys91-Cys103 and Cys105-Cys114. In terms of domain architecture, EGF-like spans 91–115 (CQNGGTCILGAFCACPKHFSGRHCE).

This sequence belongs to the EGF-CFC (Cripto-1/FRL1/Cryptic) family.

The protein localises to the cell membrane. It is found in the secreted. In terms of biological role, may play a role in mesoderm and/or neural patterning during gastrulation. In Gallus gallus (Chicken), this protein is Cryptic protein (CFC1).